Here is a 90-residue protein sequence, read N- to C-terminus: MSRTVFCQRLKKEGPGLDFQLYPGELGKRIFDNISKEAWTEWQKKQVMLINEKKLNMMNLEHRQLLEKEMVNYLFEAGEVAIDGYTPPSK.

This sequence belongs to the Fe(2+)-trafficking protein family.

In terms of biological role, could be a mediator in iron transactions between iron acquisition and iron-requiring processes, such as synthesis and/or repair of Fe-S clusters in biosynthetic enzymes. The sequence is that of Probable Fe(2+)-trafficking protein from Aeromonas hydrophila subsp. hydrophila (strain ATCC 7966 / DSM 30187 / BCRC 13018 / CCUG 14551 / JCM 1027 / KCTC 2358 / NCIMB 9240 / NCTC 8049).